A 558-amino-acid polypeptide reads, in one-letter code: Phosphatidylserine lipase ABHD16A (558 aa).

2 helical membrane-spanning segments follow: residues 60-80 (ILALASVFWSISYYSSPFAFF) and 93-113 (VVPFSHYAGTLLVLLAGVACL). Over 114-558 (RGIGRWTNPQ…AQHFQMPWCL (445 aa)) the chain is Cytoplasmic. Residues 281-407 (LVICCEGNAG…LVTRTVRQHL (127 aa)) enclose the AB hydrolase-1 domain. Catalysis depends on charge relay system residues serine 355, aspartate 430, and histidine 507.

Belongs to the AB hydrolase superfamily. ABHD16 family.

The protein localises to the membrane. It catalyses the reaction 1-heptadecanoyl-2-(5Z,8Z,11Z,14Z-eicosatetraenoyl)-sn-glycero-3-phosphoserine + H2O = 1-heptadecanoyl-sn-glycero-3-phosphoserine + (5Z,8Z,11Z,14Z)-eicosatetraenoate + H(+). The catalysed reaction is 1-hexadecanoyl-2-(9Z-octadecenoyl)-sn-glycero-3-phospho-L-serine + H2O = 1-hexadecanoyl-sn-glycero-3-phospho-L-serine + (9Z)-octadecenoate + H(+). It carries out the reaction 1-octadecanoyl-2-(9Z,12Z-octadecadienoyl)-sn-glycero-3-phosphoserine + H2O = 1-octadecanoyl-sn-glycero-3-phosphoserine + (9Z,12Z)-octadecadienoate + H(+). The enzyme catalyses 1-heptadecanoyl-2-(5Z,8Z,11Z,14Z-eicosatetraenoyl)-sn-glycero-3-phosphocholine + H2O = 1-heptadecanoyl-sn-glycero-3-phosphocholine + (5Z,8Z,11Z,14Z)-eicosatetraenoate + H(+). It catalyses the reaction 1-hexadecanoyl-2-(9Z-octadecenoyl)-sn-glycero-3-phosphoglycerol + H2O = 1-hexadecanoyl-sn-glycero-3-phosphoglycerol + (9Z)-octadecenoate + H(+). The catalysed reaction is 1-hexadecanoyl-2-(9Z-octadecenoyl)-sn-glycero-3-phospho-(1D-myo-inositol) + H2O = 1-hexadecanoyl-sn-glycero-3-phospho-(1D-myo-inositol) + (9Z)-octadecenoate + H(+). It carries out the reaction 1-heptadecanoyl-2-(5Z,8Z,11Z,14Z-eicosatetraenoyl)-sn-glycero-3-phosphoethanolamine + H2O = 1-heptadecanoyl-sn-glycero-3-phosphoethanolamine + (5Z,8Z,11Z,14Z)-eicosatetraenoate + H(+). The enzyme catalyses 1-hexadecanoyl-2-(9Z-octadecenoyl)-sn-glycero-3-phospho-(1'-sn-glycerol) + H2O = 1-hexadecanoyl-sn-glycero-3-phospho-(1'-sn-glycerol) + (9Z)-octadecenoate + H(+). It catalyses the reaction Hydrolyzes glycerol monoesters of long-chain fatty acids.. The catalysed reaction is 1-tetradecanoylglycerol + H2O = tetradecanoate + glycerol + H(+). It carries out the reaction 2-hexadecanoylglycerol + H2O = glycerol + hexadecanoate + H(+). The enzyme catalyses 1-(9Z-octadecenoyl)-glycerol + H2O = glycerol + (9Z)-octadecenoate + H(+). It catalyses the reaction 2-(9Z-octadecenoyl)-glycerol + H2O = glycerol + (9Z)-octadecenoate + H(+). The catalysed reaction is 2-(9Z,12Z-octadecadienoyl)-glycerol + H2O = (9Z,12Z)-octadecadienoate + glycerol + H(+). It carries out the reaction 1-(5Z,8Z,11Z,14Z-eicosatetraenoyl)-glycerol + H2O = glycerol + (5Z,8Z,11Z,14Z)-eicosatetraenoate + H(+). The enzyme catalyses 2-(5Z,8Z,11Z,14Z-eicosatetraenoyl)-glycerol + H2O = glycerol + (5Z,8Z,11Z,14Z)-eicosatetraenoate + H(+). It catalyses the reaction prostaglandin D2-1-glycerol ester + H2O = prostaglandin D2 + glycerol + H(+). The catalysed reaction is 2-glyceryl-15-deoxy-Delta(12,14)-prostaglandin J2 + H2O = 15-deoxy-Delta(12,14)-prostaglandin J2 + glycerol + H(+). It carries out the reaction 1-(9Z,12Z-octadecadienoyl)-glycerol + H2O = (9Z,12Z)-octadecadienoate + glycerol + H(+). Functionally, phosphatidylserine (PS) lipase that mediates the hydrolysis of phosphatidylserine to generate lysophosphatidylserine (LPS). LPS constitutes a class of signaling lipids that regulates immunological and neurological processes. Has no activity towards diacylglycerol, triacylglycerol or lysophosphatidylserine lipase. Also has monoacylglycerol lipase activity, with preference for 1-(9Z,12Z-octadecadienoyl)-glycerol (1-LG) and 2-glyceryl-15-deoxy-Delta(12,14)-prostaglandin J2 (15d-PGJ(2)-G). The chain is Phosphatidylserine lipase ABHD16A from Rattus norvegicus (Rat).